The following is a 983-amino-acid chain: Receptor-type tyrosine-protein phosphatase-like N (983 aa).

The first 40 residues, 1–40 (MRRPRRPGGPAGCGGSEGSGGLRLLVCLLLLSGRPGGCSA), serve as a signal peptide directing secretion. An RESP18 homology domain region spans residues 41–137 (ISAHGCLFDR…HPRDRSGSVP (97 aa)). Over 41–579 (ISAHGCLFDR…RQAHGISPMR (539 aa)) the chain is Lumenal. A disulfide bond links C59 and C68. Positions 118-133 (RIPRLRPPEPHPRDRS) are enriched in basic and acidic residues. 3 disordered regions span residues 118–179 (RIPR…SPLS), 293–330 (RARAPRLPEEGGSSRAEDSSEGHEEEVLGGHGEKSPPQ), and 399–420 (GDTADARPPTPLLPGHPTASST). Over residues 148 to 158 (SQGNPTGSSPA) the composition is skewed to polar residues. The segment covering 307–326 (RAEDSSEGHEEEVLGGHGEK) has biased composition (basic and acidic residues). Phosphoserine is present on residues S311 and S312. The segment at 453-579 (SPLGQSQPTV…RQAHGISPMR (127 aa)) is sufficient for dimerization of proICA512. N510 and N528 each carry an N-linked (GlcNAc...) asparagine glycan. A helical transmembrane segment spans residues 580 to 604 (SLLLTLVALAGVAGLLVALAVALCM). A sufficient for dimerization of proICA512 region spans residues 605 to 736 (RHHSKQRDKE…PNTCATAQGE (132 aa)). The Cytoplasmic segment spans residues 605–983 (RHHSKQRDKE…VNAILKALPQ (379 aa)). The tract at residues 648–684 (RAEGQPEPSRVSSVSSQFSDAAQASPSSHSSTPSWCE) is disordered. The segment covering 652–681 (QPEPSRVSSVSSQFSDAAQASPSSHSSTPS) has biased composition (low complexity). A Tyrosine-protein phosphatase domain is found at 713-973 (LAKEWQALCA…EFALTAVAEE (261 aa)). Residue K758 forms a Glycyl lysine isopeptide (Lys-Gly) (interchain with G-Cter in SUMO) linkage.

This sequence belongs to the protein-tyrosine phosphatase family. Receptor class 8 subfamily. In terms of assembly, homodimer; shown for the unprocessed protein (proICA512) in the endoplasmic reticulum and resolved during protein maturation as ICA512-TMF seems to be predominantly monomeric in secretory granules; however, ICA512-CCF interacts with ICA512-TMF disrupting the ICA512-TMF:SNTB2 complex. The isolated lumenal RESP18 homology domain has been shown to form disulfide-linked homooligomers. Interacts (via cytoplasmic domain) with phosphorylated SNTB2; this protects PTPRN against cleavage by CAPN1 to produce ICA512-CCF. Dephosphorylation of SNTB2 upon insulin stimulation disrupts the interaction and results in PTPRN cleavage. Interacts with SNX19. ICA512-CCF interacts with PIAS4; in the nucleus. Interacts with STAT5B (phosphorylated); down-regulated by ICA512-CCF sumoylation; ICA512-CCF prevents STAT5B dephosphorylation; ICA512-CCF mediates interaction of STAT5B with PIAS4. Interacts (via RESP18 homology domain) with insulin and proinsulin. Interacts with PTPRN2, PTPRA and PTPRE. In terms of processing, subject to proteolytic cleavage at multiple sites. Subject to cleavage on a pair of basic residues. Following exocytosis of secretory granules in pancreatic beta-cells ICA512-TMF located in the plasma-membrane is cleaved by mu-type calpain CPN1 to yield ICA512-CCF. Post-translationally, N-glycosylated. O-glycosylated. In terms of processing, sumoylated at two sites including Lys-758. Sumoylation decreases interaction with STAT5. In terms of tissue distribution, detected in pancreas islets. Detected in pancreas alpha, beta and delta cells, and in chromaffin cells in the adrenal medulla. Detected in amygdala, hypothalamus, autonomous nerve fibers and ganglia, especially at synaptic contacts. Detected in pituitary (at protein level). Detected in brain, specifically in cerebral cortex, diencephalon and brain stem.

It localises to the membrane. The protein resides in the cytoplasmic vesicle. It is found in the secretory vesicle membrane. Its subcellular location is the perikaryon. The protein localises to the cell projection. It localises to the axon. The protein resides in the synapse. It is found in the cell membrane. Its subcellular location is the endosome. The protein localises to the nucleus. In terms of biological role, plays a role in vesicle-mediated secretory processes. Required for normal accumulation of secretory vesicles in hippocampus, pituitary and pancreatic islets. Required for the accumulation of normal levels of insulin-containing vesicles and preventing their degradation. Plays a role in insulin secretion in response to glucose stimuli. Required for normal accumulation of the neurotransmitters norepinephrine, dopamine and serotonin in the brain. In females, but not in males, required for normal accumulation and secretion of pituitary hormones, such as luteinizing hormone (LH) and follicle-stimulating hormone (FSH). Required to maintain normal levels of renin expression and renin release. Seems to lack intrinsic enzyme activity. Its function is as follows. ICA512-TMF regulates dynamics and exocytosis of insulin secretory granules (SGs); binding of ICA512-TMF to SNTB2/beta-2-syntrophin is proposed to restrain SGs mobility and exocytosis by tethering them to the actin cytoskeleton depending on UTRN; the function is inhibited by cytoplasmic ICA512-CFF dimerizing with ICA512-TMF and displacing SNTB2. Functionally, ICA512-CCF translocated to the nucleus promotes expression of insulin and other granule-related genes; the function implicates binding to and regulating activity of STAT5B probably by preventing its dephosphorylation and potentially by inducing its sumoylation by recruiting PIAS4. Enhances pancreatic beta-cell proliferation by converging with signaling by STAT5B and STAT3. ICA512-CCF located in the cytoplasm regulates dynamics and exocytosis of insulin secretory granules (SGs) by dimerizing with ICA512-TMF and displacing SNTB2 thus enhancing SGs mobility and exocytosis. The polypeptide is Receptor-type tyrosine-protein phosphatase-like N (Ptprn) (Rattus norvegicus (Rat)).